A 183-amino-acid chain; its full sequence is MAEENAQEKQAPPSAGEQSEPLVTLERGPVSQFLADNGFEHQYLGRDAAGVELLEVERDFLLPLCTALYAYGFNYLECQCGYDLGAGQPLVSLYHLIKLSDGADRPQEVRLQVKLPRQDPRLPSVYWIWKSADWQERETYDMYGIVFEGHPNLKRILMPEDWIGWPLRKDYITPDFYELQDAY.

The disordered stretch occupies residues 1–21 (MAEENAQEKQAPPSAGEQSEP).

The protein belongs to the complex I 30 kDa subunit family. As to quaternary structure, NDH-1 can be composed of about 15 different subunits; different subcomplexes with different compositions have been identified which probably have different functions.

The protein localises to the cellular thylakoid membrane. The enzyme catalyses a plastoquinone + NADH + (n+1) H(+)(in) = a plastoquinol + NAD(+) + n H(+)(out). The catalysed reaction is a plastoquinone + NADPH + (n+1) H(+)(in) = a plastoquinol + NADP(+) + n H(+)(out). In terms of biological role, NDH-1 shuttles electrons from an unknown electron donor, via FMN and iron-sulfur (Fe-S) centers, to quinones in the respiratory and/or the photosynthetic chain. The immediate electron acceptor for the enzyme in this species is believed to be plastoquinone. Couples the redox reaction to proton translocation, and thus conserves the redox energy in a proton gradient. Cyanobacterial NDH-1 also plays a role in inorganic carbon-concentration. The protein is NAD(P)H-quinone oxidoreductase subunit J of Synechococcus sp. (strain JA-2-3B'a(2-13)) (Cyanobacteria bacterium Yellowstone B-Prime).